The following is a 537-amino-acid chain: Prolyl 4-hydroxylase subunit alpha-2 (537 aa).

A signal peptide spans 1 to 23; sequence MKLQVLVLVLLMSWFGVLSWVQA. Asn-117 carries N-linked (GlcNAc...) asparagine glycosylation. A TPR repeat occupies 209-242; sequence SLVLDYLSYAVFQLGDLHRAVELTRRLLSLDPSH. Residue Asn-266 is glycosylated (N-linked (GlcNAc...) asparagine). Residues 414–522 enclose the Fe2OG dioxygenase domain; sequence TAELLQVANY…KWVSNKWFHE (109 aa). Fe cation-binding residues include His-432 and Asp-434. An N6-succinyllysine modification is found at Lys-482. Residue His-503 participates in Fe cation binding. Residue Lys-513 participates in 2-oxoglutarate binding.

This sequence belongs to the P4HA family. In terms of assembly, heterotetramer of two alpha-2 chains and two beta chains (P4HB) (the beta chain is the multi-functional PDI), where P4HB plays the role of a structural subunit; this tetramer catalyzes the formation of 4-hydroxyproline in collagen. It depends on Fe(2+) as a cofactor. L-ascorbate serves as cofactor. In terms of tissue distribution, expressed at least in brain, heart and lung.

It is found in the endoplasmic reticulum lumen. The catalysed reaction is L-prolyl-[collagen] + 2-oxoglutarate + O2 = trans-4-hydroxy-L-prolyl-[collagen] + succinate + CO2. Its activity is regulated as follows. Inhibited by poly(L-proline) only at very high concentrations. Its function is as follows. Catalyzes the post-translational formation of 4-hydroxyproline in -Xaa-Pro-Gly- sequences in collagens and other proteins. This Mus musculus (Mouse) protein is Prolyl 4-hydroxylase subunit alpha-2 (P4ha2).